The primary structure comprises 473 residues: MTAIYNTLTRQKEPFAPIDPENVRMYVCGMTVYDYCHLGHARVMVVFDMIARWLRECGYPLTYVRNITDIDDKIIARAAENGETIGELNARFIQAMHEDADALGVLRPDIEPKATENIPQMIAMIETLIQNGKAYPAANGDVYYAVREFAAYGQLSGKSLDDLRAGERVEVDGFKRDPLDFVLWKAAKAGEPAWESPWGNGRPGWHIECSAMSENLFGDTFDIHGGGADLQFPHHENEIAQSVGASGHTCGHDHAQTHHGQSIASHVKYWLHNGFIRVDGEKMSKSLGNFFTIREVLKQYDPEVVRFFILRAHYRSPLNYSDAHLDDAKGALTRLYTTLKNTPAAEFDLSENANGYTRRFYAAMNDDFGTVEAVAVLFELAGEVNKTNDAHLAGCLKALGGIIGLLQRNPIEFLQGGAVSDGLSNEEIEDLIARRKQARADKNWAESDRIRDLLNEHKIILEDSAGGTTWRRG.

Position 28 (Cys28) interacts with Zn(2+). A 'HIGH' region motif is present at residues 30–40; sequence MTVYDYCHLGH. Cys209, His234, and Glu238 together coordinate Zn(2+). Positions 282 to 286 match the 'KMSKS' region motif; the sequence is KMSKS. Lys285 is a binding site for ATP.

This sequence belongs to the class-I aminoacyl-tRNA synthetase family. Monomer. Zn(2+) serves as cofactor.

The protein localises to the cytoplasm. It carries out the reaction tRNA(Cys) + L-cysteine + ATP = L-cysteinyl-tRNA(Cys) + AMP + diphosphate. The polypeptide is Cysteine--tRNA ligase (Neisseria gonorrhoeae (strain ATCC 700825 / FA 1090)).